A 212-amino-acid polypeptide reads, in one-letter code: Peptide methionine sulfoxide reductase MsrA (212 aa).

Cys51 is a catalytic residue.

The protein belongs to the MsrA Met sulfoxide reductase family.

It catalyses the reaction L-methionyl-[protein] + [thioredoxin]-disulfide + H2O = L-methionyl-(S)-S-oxide-[protein] + [thioredoxin]-dithiol. It carries out the reaction [thioredoxin]-disulfide + L-methionine + H2O = L-methionine (S)-S-oxide + [thioredoxin]-dithiol. Has an important function as a repair enzyme for proteins that have been inactivated by oxidation. Catalyzes the reversible oxidation-reduction of methionine sulfoxide in proteins to methionine. This chain is Peptide methionine sulfoxide reductase MsrA, found in Vibrio cholerae serotype O1 (strain ATCC 39541 / Classical Ogawa 395 / O395).